We begin with the raw amino-acid sequence, 393 residues long: S-adenosylmethionine synthase 2 (393 aa).

Glu9 is a binding site for Mg(2+). An ATP-binding site is contributed by His15. Position 43 (Glu43) interacts with K(+). Glu56 and Gln99 together coordinate L-methionine. ATP-binding positions include 167–169 (DGK), 235–238 (SGRF), Asp246, 252–253 (RK), Ala269, Lys273, and Lys277. An L-methionine-binding site is contributed by Asp246. Lys277 serves as a coordination point for L-methionine.

The protein belongs to the AdoMet synthase family. Homotetramer. The cofactor is Mn(2+). Mg(2+) serves as cofactor. It depends on Co(2+) as a cofactor. K(+) is required as a cofactor. In terms of tissue distribution, mostly expressed in flowers, seedpods and roots, and, to a lower extent, in stems and leaves.

The protein resides in the cytoplasm. The catalysed reaction is L-methionine + ATP + H2O = S-adenosyl-L-methionine + phosphate + diphosphate. It functions in the pathway amino-acid biosynthesis; S-adenosyl-L-methionine biosynthesis; S-adenosyl-L-methionine from L-methionine: step 1/1. Functionally, catalyzes the formation of S-adenosylmethionine from methionine and ATP. The reaction comprises two steps that are both catalyzed by the same enzyme: formation of S-adenosylmethionine (AdoMet) and triphosphate, and subsequent hydrolysis of the triphosphate. The polypeptide is S-adenosylmethionine synthase 2 (MSAMS2) (Brassica juncea (Indian mustard)).